The following is a 47-amino-acid chain: Putative protein PinH (47 aa).

A Resolvase/invertase-type recombinase catalytic domain is found at 1 to 47 (MWHLVVLLEELCERGINFRALAQSIFAQQWGDECCKSKTICDLKVIV).

Belongs to the site-specific recombinase resolvase family.

The sequence is that of Putative protein PinH (pinH) from Escherichia coli (strain K12).